Reading from the N-terminus, the 834-residue chain is Unextended protein (834 aa).

The signal sequence occupies residues methionine 1–glycine 20. The Extracellular portion of the chain corresponds to threonine 21–proline 182. 3 N-linked (GlcNAc...) asparagine glycosylation sites follow: asparagine 38, asparagine 42, and asparagine 156. Residues proline 182–glutamate 361 enclose the CNNM transmembrane domain. Residues leucine 183–phenylalanine 203 form a helical membrane-spanning segment. Over serine 204 to asparagine 244 the chain is Cytoplasmic. The helical transmembrane segment at tyrosine 245 to leucine 265 threads the bilayer. Residues aspartate 266–glycine 267 lie on the Extracellular side of the membrane. A helical membrane pass occupies residues leucine 268–isoleucine 288. Residues threonine 289 to glycine 298 are Cytoplasmic-facing. Residues leucine 299–leucine 319 form a helical membrane-spanning segment. Over serine 320–proline 834 the chain is Extracellular. 2 consecutive CBS domains span residues methionine 380–leucine 441 and tyrosine 448–glutamate 515. N-linked (GlcNAc...) asparagine glycosylation occurs at asparagine 522. Residue tyrosine 604 to proline 656 participates in a nucleoside 3',5'-cyclic phosphate binding. Residues cysteine 739–proline 765 form a disordered region. Residues phenylalanine 740 to arginine 763 show a composition bias toward polar residues. Asparagine 743, asparagine 751, and asparagine 790 each carry an N-linked (GlcNAc...) asparagine glycan. The tract at residues serine 807–proline 834 is disordered. Residues lysine 822–proline 834 show a composition bias toward basic and acidic residues.

The protein belongs to the ACDP family. As to quaternary structure, interacts with PRL-1, possibly at the plasma membrane.

The protein resides in the cell membrane. Functionally, probable metal transporter. Acts downstream of PRL-1 and protects the nervous system against olfactory carbon dioxide stimulation. This chain is Unextended protein, found in Drosophila melanogaster (Fruit fly).